The chain runs to 542 residues: Berberine bridge enzyme-like 25 (542 aa).

A signal peptide spans 1-30 (MGNSKPLPTISCISVFALYFSFYTITLTSS). The cysteines at positions 40 and 104 are disulfide-linked. N-linked (GlcNAc...) asparagine glycosylation is present at N61. The FAD-binding PCMH-type domain maps to 82–258 (TMPKPGFIFK…LSWKIKLVPV (177 aa)). The residue at position 119 (H119) is a Pros-8alpha-FAD histidine. N-linked (GlcNAc...) asparagine glycans are attached at residues N308 and N436.

It belongs to the oxygen-dependent FAD-linked oxidoreductase family. It depends on FAD as a cofactor.

The protein localises to the secreted. It localises to the cell wall. The protein is Berberine bridge enzyme-like 25 of Arabidopsis thaliana (Mouse-ear cress).